A 358-amino-acid chain; its full sequence is Peptide chain release factor 1 (358 aa).

Q234 is subject to N5-methylglutamine.

The protein belongs to the prokaryotic/mitochondrial release factor family. Methylated by PrmC. Methylation increases the termination efficiency of RF1.

It localises to the cytoplasm. Its function is as follows. Peptide chain release factor 1 directs the termination of translation in response to the peptide chain termination codons UAG and UAA. In Leifsonia xyli subsp. xyli (strain CTCB07), this protein is Peptide chain release factor 1.